The sequence spans 310 residues: Pantothenate kinase (310 aa).

Gly-95–Ser-102 contributes to the ATP binding site.

Belongs to the prokaryotic pantothenate kinase family.

The protein resides in the cytoplasm. The enzyme catalyses (R)-pantothenate + ATP = (R)-4'-phosphopantothenate + ADP + H(+). It participates in cofactor biosynthesis; coenzyme A biosynthesis; CoA from (R)-pantothenate: step 1/5. The protein is Pantothenate kinase of Mycobacteroides abscessus (strain ATCC 19977 / DSM 44196 / CCUG 20993 / CIP 104536 / JCM 13569 / NCTC 13031 / TMC 1543 / L948) (Mycobacterium abscessus).